Here is a 161-residue protein sequence, read N- to C-terminus: Putative 2'-deoxynucleoside 5'-phosphate N-hydrolase 1 (161 aa).

Substrate contacts are provided by residues 27-33, Tyr42, His60, Glu106, and 128-130; these read FLSGSIR and SSM.

It belongs to the 2'-deoxynucleoside 5'-phosphate N-hydrolase 1 family. Monomer and homodimer.

It catalyses the reaction a pyrimidine 2'-deoxyribonucleoside 5'-phosphate + H2O = a pyrimidine nucleobase + 2-deoxy-D-ribose 5-phosphate. It carries out the reaction a purine 2'-deoxyribonucleoside 5'-phosphate + H2O = a purine nucleobase + 2-deoxy-D-ribose 5-phosphate. Functionally, catalyzes the cleavage of the N-glycosidic bond of deoxyribonucleoside 5'-monophosphates to yield deoxyribose 5-phosphate and a purine or pyrimidine base. The sequence is that of Putative 2'-deoxynucleoside 5'-phosphate N-hydrolase 1 from Methanosarcina mazei (strain ATCC BAA-159 / DSM 3647 / Goe1 / Go1 / JCM 11833 / OCM 88) (Methanosarcina frisia).